A 202-amino-acid polypeptide reads, in one-letter code: High mobility group protein B3 (202 aa).

DNA-binding regions (HMG box) lie at residues 9-79 and 93-161; these read PKGK…KDYG and PKRP…ADYK. 2 positions are modified to cysteine sulfonic acid (-SO3H); alternate: Cys23 and Cys45. A disulfide bridge links Cys23 with Cys45. The disordered stretch occupies residues 71–98; it reads YDREMKDYGPAKGGKKKKDPNAPKRPPS. A Cysteine sulfonic acid (-SO3H) modification is found at Cys104. The segment at 161–202 is disordered; the sequence is KSKGKFDGAKGAATKAARKKVEEEDEEEEEDEEEEDEDDDDE. Residues 183 to 202 show a composition bias toward acidic residues; the sequence is EEDEEEEEDEEEEDEDDDDE.

It belongs to the HMGB family. Reduction/oxidation of cysteine residues Cys-23, Cys-45 and Cys-104 and a possible intramolecular disulfide bond involving Cys-23 and Cys-45 give rise to different redox forms with specific functional activities in various cellular compartments: 1- fully reduced HMGB3 (HMGB3C23hC45hC104h), 2- disulfide HMGB3 (HMGB3C23-C45C104h) and 3- sulfonyl HMGB3 (HMGB3C23soC45soC104so).

The protein localises to the nucleus. It is found in the chromosome. The protein resides in the cytoplasm. Its function is as follows. Multifunctional protein with various roles in different cellular compartments. May act in a redox sensitive manner. Associates with chromatin and binds DNA with a preference for non-canonical DNA structures such as single-stranded DNA. Can bend DNA and enhance DNA flexibility by looping thus providing a mechanism to promote activities on various gene promoters. Binds to the delta-1 crystallin/ASL1 enhancer. Proposed to be involved in the innate immune response to nucleic acids by acting as a cytoplasmic promiscuous immunogenic DNA/RNA sensor. The protein is High mobility group protein B3 (HMGB3) of Gallus gallus (Chicken).